The chain runs to 354 residues: Trans-L-3-hydroxyproline dehydratase (354 aa).

The active-site Proton acceptor is the Cys104. Substrate is bound by residues 105 to 106 (GH), Asp269, and 274 to 275 (GS).

Belongs to the proline racemase family. As to quaternary structure, homodimer.

The enzyme catalyses trans-3-hydroxy-L-proline = 1-pyrroline-2-carboxylate + H2O. In terms of biological role, catalyzes the dehydration of trans-3-hydroxy-L-proline to Delta(1)-pyrroline-2-carboxylate (Pyr2C). The polypeptide is Trans-L-3-hydroxyproline dehydratase (L3HYPDH) (Bos taurus (Bovine)).